We begin with the raw amino-acid sequence, 461 residues long: MATSNLRRHLSASRLRLNRFISTSSSYHSHRRVVVTGLGMVTPLGRGVETTWRRLIDGECGIRGLTLDDLKMKSFDEETKLYTFDQLSSKVAAFVPYGSNPGEFDEALWLNSKAVANFIGYAVCAADEALRDAEWLPTEEEEKERTGVSIGGGIGSICDIVEAAQLICEKRLRRLSPFFIPKILVNMASGHVSMKYGFQGPNHAAVTACATGAHSIGDATRMIQFGDADVMVAGGTESSIDALSVAGFSRSRALSTKFNSSPQEASRPFDCDRDGFVIGEGSGVIVLEEYEHAKRRGAKIYAELCGYGMSGDAHHITQPPEDGKGAVLAMTRALRQSGLCPNQIDYVNAHATSTPIGDAVEARAIKTVFSEHATSGTLAFSSTKGATGHLLGAAGAVEAIFSILAIHHGVAPMTLNVKNPDPIFDKRFMPLTTSKKMLVRTAMSNSFGFGGTNASLLFASI.

Residues methionine 1–histidine 28 constitute a mitochondrion transit peptide. The Ketosynthase family 3 (KS3) domain maps to histidine 30–serine 460. Residues cysteine 209, histidine 350, and histidine 389 each act as for beta-ketoacyl synthase activity in the active site.

This sequence belongs to the thiolase-like superfamily. Beta-ketoacyl-ACP synthases family. In terms of assembly, homodimer. Expressed at the same level in leaves, roots, siliques and flowers.

It localises to the mitochondrion. It catalyses the reaction a fatty acyl-[ACP] + malonyl-[ACP] + H(+) = a 3-oxoacyl-[ACP] + holo-[ACP] + CO2. It carries out the reaction butanoyl-[ACP] + malonyl-[ACP] + H(+) = 3-oxohexanoyl-[ACP] + holo-[ACP] + CO2. The enzyme catalyses hexanoyl-[ACP] + malonyl-[ACP] + H(+) = 3-oxooctanoyl-[ACP] + holo-[ACP] + CO2. The catalysed reaction is octanoyl-[ACP] + malonyl-[ACP] + H(+) = 3-oxodecanoyl-[ACP] + holo-[ACP] + CO2. It catalyses the reaction decanoyl-[ACP] + malonyl-[ACP] + H(+) = 3-oxododecanoyl-[ACP] + holo-[ACP] + CO2. It carries out the reaction dodecanoyl-[ACP] + malonyl-[ACP] + H(+) = 3-oxotetradecanoyl-[ACP] + holo-[ACP] + CO2. The enzyme catalyses tetradecanoyl-[ACP] + malonyl-[ACP] + H(+) = 3-oxohexadecanoyl-[ACP] + holo-[ACP] + CO2. The catalysed reaction is hexadecanoyl-[ACP] + malonyl-[ACP] + H(+) = 3-oxooctadecanoyl-[ACP] + holo-[ACP] + CO2. Its pathway is lipid metabolism; fatty acid biosynthesis. Its activity is regulated as follows. Inhibited by cerulenin. In terms of biological role, catalyzes all the condensation reaction of fatty acid synthesis by the addition to an acyl acceptor of two carbons from malonyl-ACP. Able to elongate saturated acyl chains from 4 to at least 16 carbons. Uses malonyl-CoA but not acetyl-CoA as primer substrate. When expressed in a heterologous system, reveals a bimodal distribution of products, with peaks at C8 and C14-C16. The major product of the reaction (octanoyl-ACP) is required for the lipoylation of essential mitochondrial proteins. Required for mitochondrial fatty acid synthesis (mtFAS). MtFAS are essential for photorespiration and plant development, probably by influencing mitochondrial membrane lipid composition and other lipid metabolic pathways. This chain is 3-oxoacyl-[acyl-carrier-protein] synthase, mitochondrial, found in Arabidopsis thaliana (Mouse-ear cress).